The following is an 86-amino-acid chain: DNA replication protein 1 (86 aa).

Positions 38–67 (LELEKKMTKLEHENKLMKNALYELSRMENN) form a coiled coil.

It belongs to the phi29likevirus DNA replication protein 1 family. As to quaternary structure, homomultimer. Self-associates into large complexes forming long filamentous structures. Interacts (via N-terminus) with the primer terminal protein. Interacts with host FtsZ protein.

Its subcellular location is the host membrane. In terms of biological role, protein that assembles into highly ordered structures and provides a specific site for viral DNA replication. Probably anchors the viral DNA replisome to the host membrane. This Bacillus subtilis (Bacteriophage phi-29) protein is DNA replication protein 1 (1).